Consider the following 940-residue polypeptide: Isoleucine--tRNA ligase (940 aa).

Positions 58-68 (PYANGSIHIGH) match the 'HIGH' region motif. Glu-564 is a binding site for L-isoleucyl-5'-AMP. A 'KMSKS' region motif is present at residues 605 to 609 (KMSKS). ATP is bound at residue Lys-608. Residues Cys-903, Cys-906, Cys-923, and Cys-926 each coordinate Zn(2+).

Belongs to the class-I aminoacyl-tRNA synthetase family. IleS type 1 subfamily. In terms of assembly, monomer. Zn(2+) serves as cofactor.

It localises to the cytoplasm. The catalysed reaction is tRNA(Ile) + L-isoleucine + ATP = L-isoleucyl-tRNA(Ile) + AMP + diphosphate. Its function is as follows. Catalyzes the attachment of isoleucine to tRNA(Ile). As IleRS can inadvertently accommodate and process structurally similar amino acids such as valine, to avoid such errors it has two additional distinct tRNA(Ile)-dependent editing activities. One activity is designated as 'pretransfer' editing and involves the hydrolysis of activated Val-AMP. The other activity is designated 'posttransfer' editing and involves deacylation of mischarged Val-tRNA(Ile). The sequence is that of Isoleucine--tRNA ligase from Shewanella amazonensis (strain ATCC BAA-1098 / SB2B).